The sequence spans 424 residues: Enolase (424 aa).

Gln-165 serves as a coordination point for (2R)-2-phosphoglycerate. Residue Glu-207 is the Proton donor of the active site. Mg(2+) is bound by residues Asp-244, Glu-283, and Asp-310. (2R)-2-phosphoglycerate-binding residues include Lys-335, Arg-364, Ser-365, and Lys-386. The active-site Proton acceptor is the Lys-335.

The protein belongs to the enolase family. It depends on Mg(2+) as a cofactor.

The protein localises to the cytoplasm. Its subcellular location is the secreted. It localises to the cell surface. The catalysed reaction is (2R)-2-phosphoglycerate = phosphoenolpyruvate + H2O. It functions in the pathway carbohydrate degradation; glycolysis; pyruvate from D-glyceraldehyde 3-phosphate: step 4/5. Functionally, catalyzes the reversible conversion of 2-phosphoglycerate (2-PG) into phosphoenolpyruvate (PEP). It is essential for the degradation of carbohydrates via glycolysis. The polypeptide is Enolase (Chlamydia trachomatis serovar D (strain ATCC VR-885 / DSM 19411 / UW-3/Cx)).